We begin with the raw amino-acid sequence, 348 residues long: Uroporphyrinogen decarboxylase (348 aa).

Substrate-binding positions include arginine 29 to arginine 33, aspartate 79, tyrosine 155, threonine 210, and histidine 326.

Belongs to the uroporphyrinogen decarboxylase family. In terms of assembly, homodimer.

Its subcellular location is the cytoplasm. It catalyses the reaction uroporphyrinogen III + 4 H(+) = coproporphyrinogen III + 4 CO2. Its pathway is porphyrin-containing compound metabolism; protoporphyrin-IX biosynthesis; coproporphyrinogen-III from 5-aminolevulinate: step 4/4. In terms of biological role, catalyzes the decarboxylation of four acetate groups of uroporphyrinogen-III to yield coproporphyrinogen-III. This is Uroporphyrinogen decarboxylase from Rhodospirillum rubrum (strain ATCC 11170 / ATH 1.1.1 / DSM 467 / LMG 4362 / NCIMB 8255 / S1).